The sequence spans 944 residues: Bifunctional glutamine synthetase adenylyltransferase/adenylyl-removing enzyme (944 aa).

Positions M1–D440 are adenylyl removase. Residues V448 to E944 are adenylyl transferase.

This sequence belongs to the GlnE family. The cofactor is Mg(2+).

It catalyses the reaction [glutamine synthetase]-O(4)-(5'-adenylyl)-L-tyrosine + phosphate = [glutamine synthetase]-L-tyrosine + ADP. It carries out the reaction [glutamine synthetase]-L-tyrosine + ATP = [glutamine synthetase]-O(4)-(5'-adenylyl)-L-tyrosine + diphosphate. In terms of biological role, involved in the regulation of glutamine synthetase GlnA, a key enzyme in the process to assimilate ammonia. When cellular nitrogen levels are high, the C-terminal adenylyl transferase (AT) inactivates GlnA by covalent transfer of an adenylyl group from ATP to specific tyrosine residue of GlnA, thus reducing its activity. Conversely, when nitrogen levels are low, the N-terminal adenylyl removase (AR) activates GlnA by removing the adenylyl group by phosphorolysis, increasing its activity. The regulatory region of GlnE binds the signal transduction protein PII (GlnB) which indicates the nitrogen status of the cell. This Proteus mirabilis (strain HI4320) protein is Bifunctional glutamine synthetase adenylyltransferase/adenylyl-removing enzyme.